We begin with the raw amino-acid sequence, 360 residues long: NADH-quinone oxidoreductase subunit H (360 aa).

8 helical membrane-spanning segments follow: residues 22–42, 97–117, 130–150, 170–190, 208–228, 255–275, 292–312, and 336–356; these read ITVG…IPLI, ALFY…WAVI, IGLL…IIAG, ISYE…SGSM, VFSW…ISAV, GFAF…IAAL, WGFI…AVLY, and VLIP…ISPL.

It belongs to the complex I subunit 1 family. As to quaternary structure, NDH-1 is composed of 14 different subunits. Subunits NuoA, H, J, K, L, M, N constitute the membrane sector of the complex.

The protein resides in the cell inner membrane. The enzyme catalyses a quinone + NADH + 5 H(+)(in) = a quinol + NAD(+) + 4 H(+)(out). In terms of biological role, NDH-1 shuttles electrons from NADH, via FMN and iron-sulfur (Fe-S) centers, to quinones in the respiratory chain. The immediate electron acceptor for the enzyme in this species is believed to be ubiquinone. Couples the redox reaction to proton translocation (for every two electrons transferred, four hydrogen ions are translocated across the cytoplasmic membrane), and thus conserves the redox energy in a proton gradient. This subunit may bind ubiquinone. The polypeptide is NADH-quinone oxidoreductase subunit H (Neisseria meningitidis serogroup C / serotype 2a (strain ATCC 700532 / DSM 15464 / FAM18)).